A 333-amino-acid polypeptide reads, in one-letter code: Transaldolase (333 aa).

K135 acts as the Schiff-base intermediate with substrate in catalysis.

Belongs to the transaldolase family. Type 1 subfamily. As to quaternary structure, homodimer.

Its subcellular location is the cytoplasm. The catalysed reaction is D-sedoheptulose 7-phosphate + D-glyceraldehyde 3-phosphate = D-erythrose 4-phosphate + beta-D-fructose 6-phosphate. The protein operates within carbohydrate degradation; pentose phosphate pathway; D-glyceraldehyde 3-phosphate and beta-D-fructose 6-phosphate from D-ribose 5-phosphate and D-xylulose 5-phosphate (non-oxidative stage): step 2/3. Transaldolase is important for the balance of metabolites in the pentose-phosphate pathway. In Prochlorococcus marinus (strain MIT 9301), this protein is Transaldolase.